The following is a 541-amino-acid chain: Chaperonin GroEL 5 (541 aa).

Residues 30 to 33 (TLGP), Gly-415, and Asp-496 contribute to the ATP site.

This sequence belongs to the chaperonin (HSP60) family. As to quaternary structure, forms a cylinder of 14 subunits composed of two heptameric rings stacked back-to-back. Interacts with the co-chaperonin GroES.

Its subcellular location is the cytoplasm. It carries out the reaction ATP + H2O + a folded polypeptide = ADP + phosphate + an unfolded polypeptide.. Its function is as follows. Together with its co-chaperonin GroES, plays an essential role in assisting protein folding. The GroEL-GroES system forms a nano-cage that allows encapsulation of the non-native substrate proteins and provides a physical environment optimized to promote and accelerate protein folding. This is Chaperonin GroEL 5 from Bradyrhizobium diazoefficiens (strain JCM 10833 / BCRC 13528 / IAM 13628 / NBRC 14792 / USDA 110).